A 690-amino-acid polypeptide reads, in one-letter code: uncharacterized protein (690 aa).

This is an uncharacterized protein from Acanthamoeba polyphaga mimivirus (APMV).